Here is a 125-residue protein sequence, read N- to C-terminus: Calcitonin receptor-stimulating peptide 1 (125 aa).

The signal sequence occupies residues 1-25 (MGFWKFPPFLVLSILVLYQAGMFHA). A propeptide spanning residues 26–77 (APFRSVFDGRFDPATLDEEESRLLLAAMVNDYEQMRTRESEKAQKTEGSRIQ) is cleaved from the precursor. A disulfide bond links C81 and C86.

This sequence belongs to the calcitonin family.

Its subcellular location is the secreted. Stimulates cAMP production via the calcitonin receptor (CT) but not via the CT-like (CL) receptor. The sequence is that of Calcitonin receptor-stimulating peptide 1 (CRSP1) from Ovis aries (Sheep).